Consider the following 748-residue polypeptide: Structure-specific endonuclease subunit SLX4 (748 aa).

The tract at residues 50–102 (LSSDDDSISTQVKSVTAQKSPITQETTKNDTERNKDVDKSCNPVSTSQPDLGE) is disordered. Residues 57–75 (ISTQVKSVTAQKSPITQET) show a composition bias toward polar residues. Thr-72 is subject to Phosphothreonine; by ATR and ATM. The span at 76-88 (TKNDTERNKDVDK) shows a compositional bias: basic and acidic residues. Thr-113 carries the phosphothreonine; by ATR and ATM modification. 2 disordered regions span residues 215–236 (IKTQ…KGEK) and 277–303 (EKSS…PPEL). Residues 222–236 (NSDKPPRARNNKGEK) show a composition bias toward basic and acidic residues. Residues 277–291 (EKSSSSLDNQESSQQ) show a composition bias toward low complexity. Ser-289 carries the phosphoserine; by ATR and ATM modification. A Phosphothreonine; by ATR and ATM modification is found at Thr-319. Ser-329 and Ser-355 each carry phosphoserine; by ATR and ATM.

The protein belongs to the SLX4 family. Forms a heterodimer with SLX1. Interacts with RAD1; catalytic subunit of the RAD1-RAD10 endonuclease. Interacts with RTT107. Phosphorylated by ATR (MEC1) and ATM (TEL1) upon DNA damage. This appears to be required for the function with the RAD1-RAD10 endonuclease.

The protein resides in the nucleus. It localises to the cytoplasm. Regulatory subunit that interacts with and increases the activity of different structure-specific endonucleases. Has several distinct roles in protecting genome stability by resolving diverse forms of deleterious DNA structures. Component of the SLX1-SLX4 structure-specific endonuclease that resolves DNA secondary structures generated during DNA repair and recombination. Has endonuclease activity towards branched DNA substrates, introducing single-strand cuts in duplex DNA close to junctions with ss-DNA. Has a preference for simple Y, 5'-flap and replication fork-like structures. It cleaves the strand bearing the 5'-non-homologous arm at the branch site junction and generates ligatable, nicked products from the 5'-flap or replication fork substrates. Plays a critical role in maintaining the integrity of the ribosomal DNA (rDNA) loci, where it has a role in re-starting stalled replication forks. Has Holliday junction resolvase activity in vitro. Interacts with the structure-specific RAD1-RAD10 endonuclease and promotes RAD1-RAD10-dependent 3'-non-homologous tail removal (NHTR) during repair of double-strand breaks by single-strand annealing. SLX4 also promotes recovery from DNA-alkylation-induced replisome stalling during DNA replication by facilitating the error-free mode of lesion bypass. This does not require SLX1 or RAD1-RAD10, but probably RTT107. The protein is Structure-specific endonuclease subunit SLX4 of Saccharomyces cerevisiae (strain YJM789) (Baker's yeast).